The sequence spans 519 residues: GTPase Der (519 aa).

Composition is skewed to acidic residues over residues 1 to 12 and 30 to 54; these read MDVEGAFADEEE and GYED…PDFG. The tract at residues 1–54 is disordered; that stretch reads MDVEGAFADEEELAPHGGWASADFDPAEFGYEDSDDDFDAEDFDETEFSNPDFG. EngA-type G domains follow at residues 81–244 and 254–427; these read CTVA…PEEP and RRVA…DNWD. Residues 87–94, 134–138, 196–199, 260–267, 307–311, and 372–375 contribute to the GTP site; these read GRPNVGKS, DTGGW, NKFD, GKPNVGKS, DTAGL, and NKWD. The KH-like domain maps to 428–510; it reads RRISTGQLNT…PVRIAVRVRE (83 aa).

Belongs to the TRAFAC class TrmE-Era-EngA-EngB-Septin-like GTPase superfamily. EngA (Der) GTPase family. In terms of assembly, associates with the 50S ribosomal subunit.

Functionally, GTPase that plays an essential role in the late steps of ribosome biogenesis. This is GTPase Der from Corynebacterium glutamicum (strain ATCC 13032 / DSM 20300 / JCM 1318 / BCRC 11384 / CCUG 27702 / LMG 3730 / NBRC 12168 / NCIMB 10025 / NRRL B-2784 / 534).